Here is a 309-residue protein sequence, read N- to C-terminus: tRNA dimethylallyltransferase (309 aa).

10–17 contacts ATP; the sequence is GPTAVGKT. 12-17 is a binding site for substrate; that stretch reads TAVGKT. Positions 35–38 are interaction with substrate tRNA; the sequence is DSMQ.

This sequence belongs to the IPP transferase family. Monomer. Mg(2+) serves as cofactor.

It carries out the reaction adenosine(37) in tRNA + dimethylallyl diphosphate = N(6)-dimethylallyladenosine(37) in tRNA + diphosphate. Its function is as follows. Catalyzes the transfer of a dimethylallyl group onto the adenine at position 37 in tRNAs that read codons beginning with uridine, leading to the formation of N6-(dimethylallyl)adenosine (i(6)A). The chain is tRNA dimethylallyltransferase from Clostridium beijerinckii (strain ATCC 51743 / NCIMB 8052) (Clostridium acetobutylicum).